The primary structure comprises 238 residues: Sugar fermentation stimulation protein homolog (238 aa).

The protein belongs to the SfsA family.

The sequence is that of Sugar fermentation stimulation protein homolog from Klebsiella pneumoniae subsp. pneumoniae (strain ATCC 700721 / MGH 78578).